A 238-amino-acid chain; its full sequence is Small ribosomal subunit protein uS2 (238 aa).

The protein belongs to the universal ribosomal protein uS2 family.

This chain is Small ribosomal subunit protein uS2, found in Moorella thermoacetica (strain ATCC 39073 / JCM 9320).